Consider the following 362-residue polypeptide: Erythritol/L-threitol dehydrogenase (362 aa).

The Zn(2+) site is built by C45, H76, E77, C109, C112, C115, and C123. 2 residues coordinate NAD(+): I195 and D215.

It belongs to the zinc-containing alcohol dehydrogenase family. Requires Zn(2+) as cofactor.

The catalysed reaction is erythritol + NAD(+) = D-erythrulose + NADH + H(+). The enzyme catalyses L-threitol + NAD(+) = L-erythrulose + NADH + H(+). Its pathway is carbohydrate metabolism; erythritol degradation. It functions in the pathway carbohydrate metabolism; L-threitol degradation. Functionally, catalyzes the NAD-dependent reversible oxidation of erythritol and L-threitol. Involved in the degradation pathways of erythritol and L-threitol, that allow M.smegmatis to grow on these compounds as the sole carbon source. The sequence is that of Erythritol/L-threitol dehydrogenase from Mycolicibacterium smegmatis (strain ATCC 700084 / mc(2)155) (Mycobacterium smegmatis).